Consider the following 92-residue polypeptide: Small ribosomal subunit protein uS19c (92 aa).

It belongs to the universal ribosomal protein uS19 family.

The protein resides in the plastid. Its subcellular location is the chloroplast. Protein S19 forms a complex with S13 that binds strongly to the 16S ribosomal RNA. The sequence is that of Small ribosomal subunit protein uS19c from Huperzia lucidula (Shining clubmoss).